Here is a 375-residue protein sequence, read N- to C-terminus: Stomatin-2 (375 aa).

Positions 1–75 are disordered; that stretch reads MKTQPSEESA…IPVPTGQPRG (75 aa). Positions 11 to 50 are enriched in low complexity; that stretch reads SPAPVNPGNSGNSGNRRASSTRISFSDQLDGGDSGDSSSN. A helical membrane pass occupies residues 120-140; it reads GLGFCGWFLMGLSWIMVISTF.

It belongs to the band 7/mec-2 family.

Its subcellular location is the membrane. Functionally, may be involved in cilia-related function. The sequence is that of Stomatin-2 (sto-2) from Caenorhabditis elegans.